A 283-amino-acid polypeptide reads, in one-letter code: Putative Ig-like domain-containing protein ORF10 (283 aa).

The N-terminal stretch at 1-55 is a signal peptide; it reads MIDKRNKKAVTHISTCLCHSSIPIYGDSPFLNTHRAAMDPRPLVLLLLLASHIST. N-linked (GlcNAc...) asparagine; by host glycans are attached at residues Asn75, Asn92, Asn121, Asn157, Asn179, Asn198, Asn223, and Asn229. An Ig-like domain is found at 129-227; sequence QPLGQSIHHA…IDQQTNLTLT (99 aa).

The protein is Putative Ig-like domain-containing protein ORF10 of Galliformes (FAdV-1).